The chain runs to 69 residues: Putative membrane protein insertion efficiency factor (69 aa).

The protein belongs to the UPF0161 family.

The protein resides in the cell inner membrane. Functionally, could be involved in insertion of integral membrane proteins into the membrane. In Geobacter sulfurreducens (strain ATCC 51573 / DSM 12127 / PCA), this protein is Putative membrane protein insertion efficiency factor.